Consider the following 350-residue polypeptide: Inactive ADP-ribosyltransferase arh2 (350 aa).

It belongs to the ADP-ribosylglycohydrolase family.

It is found in the cytoplasm. Its subcellular location is the myofibril. It localises to the sarcomere. Required for myofibril assembly and outgrowth of the cardiac chambers in the developing heart. Appears to be catalytically inactive, showing no activity against O-acetyl-ADP-ribose. The protein is Inactive ADP-ribosyltransferase arh2 (adprhl1) of Danio rerio (Zebrafish).